The sequence spans 397 residues: MTVSRLRPYATTVFAEMSALATRIGAVNLGQGFPDEDGPPKMLQAAQDAIAGGVNQYPPGPGSAPLRRAIAAQRRRHFGVDYDPETEVLVTVGATEAIAAAVLGLVEPGSEVLLIEPFYDSYSPVVAMAGAHRVTVPLVPDGRGFALDADALRRAVTPRTRALIINSPHNPTGAVLSATELAAIAEIAVAANLVVITDEVYEHLVFDHARHLPLAGFDGMAERTITISSAAKMFNCTGWKIGWACGPAELIAGVRAAKQYLSYVGGAPFQPAVALALDTEDAWVAALRNSLRARRDRLAAGLTEIGFAVHDSYGTYFLCADPRPLGYDDSTEFCAALPEKVGVAAIPMSAFCDPAAGQASQQADVWNHLVRFTFCKRDDTLDEAIRRLSVLAERPAT.

Pyridoxal 5'-phosphate-binding positions include 109–110 (GS) and 218–222 (DGMAE). Residue K232 is modified to N6-(pyridoxal phosphate)lysine.

It belongs to the class-III pyridoxal-phosphate-dependent aminotransferase family. Homodimer. The cofactor is pyridoxal 5'-phosphate.

Its subcellular location is the cytoplasm. The catalysed reaction is N-succinyl-(2S,6S)-2,6-diaminopimelate + 2-oxoglutarate = (S)-2-succinylamino-6-oxoheptanedioate + L-glutamate. The protein operates within amino-acid biosynthesis; L-lysine biosynthesis via DAP pathway; LL-2,6-diaminopimelate from (S)-tetrahydrodipicolinate (succinylase route): step 2/3. Functionally, involved in the lysine biosynthetic pathways. It catalyzes the transfer of an amino group from L-glutamate to N-succinyl-2-l-amino-6-oxoheptanedioate (N-succinyl-2-l-amino-6-ketopimelate) in a PLP-dependent reaction, yielding as products N-succinyl-l-2,6-diaminoheptanedioate (N-succinyl-diaminopimelate) and 2-oxoglutarate. The polypeptide is Probable N-succinyldiaminopimelate aminotransferase DapC (dapC) (Mycobacterium tuberculosis (strain CDC 1551 / Oshkosh)).